The primary structure comprises 338 residues: Envelope glycoprotein K (338 aa).

A signal peptide spans 1-30 (MLAVRSLQHLTTVIFITAYGLVLAWYIVFG). Topologically, residues 31-121 (ASPLHRCIYA…VNCLEALWDT (91 aa)) are extracellular. Residues 31 to 121 (ASPLHRCIYA…VNCLEALWDT (91 aa)) are involved in fusion. Asparagine 48 and asparagine 58 each carry an N-linked (GlcNAc...) asparagine; by host glycan. A helical transmembrane segment spans residues 122 to 140 (QMRLVVVGWFLYLAFVALH). The Cytoplasmic portion of the chain corresponds to 141 to 212 (QRRCMFGVVS…DPVTFLYHRP (72 aa)). Residues 213–233 (AIGVIVGCELLLRFVALGLIV) form a helical membrane-spanning segment. Residues 234 to 243 (GTALISRGAC) lie on the Extracellular side of the membrane. Residues 244 to 264 (AITHPLFLTITTWCFVSIIAL) form a helical membrane-spanning segment. The Cytoplasmic segment spans residues 265 to 301 (TELYFILRRGSAPKNAEPAAPRGRSKGWSGVCGRCCS). Residues 265–301 (TELYFILRRGSAPKNAEPAAPRGRSKGWSGVCGRCCS) are interaction with UL20. The helical transmembrane segment at 302–322 (IILSGIAVRLCYIAVVAGVVL) threads the bilayer. The Extracellular portion of the chain corresponds to 323–338 (VALRYEQEIQRRLFDL).

This sequence belongs to the alphaherpesvirinae glycoprotein K family. As to quaternary structure, interacts (via UL20 interaction region) with protein UL20 (via N-terminus); this interaction probably plays a role in the coordinate transport of protein UL20 and gK to the trans-Golgi network (TGN), and is required for the cell surface expression of gK. In terms of processing, N-glycosylated.

The protein localises to the host cell membrane. The protein resides in the host endosome membrane. Its subcellular location is the host Golgi apparatus membrane. Its function is as follows. Glycoprotein that probably modulates membrane fusion events during secondary envelopment of cytoplasmic capsids that bud into specific trans-Golgi network (TGN)-derived membranes. Also plays a role, together with gB, in virus-induced cell-to-cell fusion (syncytia formation). Seems to block fusion of virions with infected-cell membranes. The protein is Envelope glycoprotein K (gK) of Human herpesvirus 2 (strain HG52) (HHV-2).